The following is an 850-amino-acid chain: Trimethylamine-N-oxide reductase (850 aa).

Residues 1-39 constitute a signal peptide (tat-type signal); the sequence is MKNKDSLHVSRRRFLAQLGGLTVAGMLGPSLLTPRSARA. S191 is a Mo-bis(molybdopterin guanine dinucleotide) binding site.

The protein belongs to the prokaryotic molybdopterin-containing oxidoreductase family. Mo-bis(molybdopterin guanine dinucleotide) is required as a cofactor. Post-translationally, predicted to be exported by the Tat system. The position of the signal peptide cleavage has not been experimentally proven.

The protein localises to the periplasm. The enzyme catalyses trimethylamine + 2 Fe(III)-[cytochrome c] + H2O = trimethylamine N-oxide + 2 Fe(II)-[cytochrome c] + 3 H(+). Its function is as follows. Reduces trimethylamine-N-oxide (TMAO) into trimethylamine; an anaerobic reaction coupled to energy-yielding reactions. The protein is Trimethylamine-N-oxide reductase (torA) of Salmonella typhimurium (strain LT2 / SGSC1412 / ATCC 700720).